The primary structure comprises 278 residues: MTVLHSVDFFPSGKAPVAIEPRLPQAAFPEHHHDFHEIVIVEHGTGIHVFNGQPYTISGGTVCFVRDHDRHLYEHTDNLCLTNVLWRSPDAFQFLAGLDQLLPQEQDGYYPSHWRVNQSVLQQVRQLVGLMERAGDGVDAPAVANREILFMQLLVLLRRSSLMEGATNNDAKLNQLMAWLEDHFAEEVCWEAVAEQFSLSLRTLHRQLKQHTGLTPQRYLNRLRLIKARHLLRHSDHSVTEIAYRCGFGDSNHFSTLFRREFNWSPRDIRQGRDAIIQ.

The HTH araC/xylS-type domain maps to 174–272 (NQLMAWLEDH…NWSPRDIRQG (99 aa)). 2 DNA-binding regions (H-T-H motif) span residues 191-212 (EAVA…KQHT) and 239-262 (VTEI…RREF).

As to quaternary structure, binds DNA as a dimer.

Its subcellular location is the cytoplasm. In terms of biological role, activates expression of the rhaBAD and rhaT operons. The protein is HTH-type transcriptional activator RhaS of Salmonella agona (strain SL483).